The primary structure comprises 311 residues: 4-hydroxy-tetrahydrodipicolinate synthase (311 aa).

A pyruvate-binding site is contributed by threonine 51. Tyrosine 140 serves as the catalytic Proton donor/acceptor. The active-site Schiff-base intermediate with substrate is lysine 168. Isoleucine 209 is a pyruvate binding site.

The protein belongs to the DapA family. Homotetramer; dimer of dimers.

It is found in the cytoplasm. The enzyme catalyses L-aspartate 4-semialdehyde + pyruvate = (2S,4S)-4-hydroxy-2,3,4,5-tetrahydrodipicolinate + H2O + H(+). Its pathway is amino-acid biosynthesis; L-lysine biosynthesis via DAP pathway; (S)-tetrahydrodipicolinate from L-aspartate: step 3/4. In terms of biological role, catalyzes the condensation of (S)-aspartate-beta-semialdehyde [(S)-ASA] and pyruvate to 4-hydroxy-tetrahydrodipicolinate (HTPA). The sequence is that of 4-hydroxy-tetrahydrodipicolinate synthase from Streptococcus pneumoniae (strain CGSP14).